The sequence spans 1196 residues: NACHT, LRR and PYD domains-containing protein 1b allele 5 (1196 aa).

The interval 1–22 (MEESPPKQKSNTKVTQHEGQQD) is disordered. The region spanning 126–435 (QLVIIEGAAG…EFFAAISCIL (310 aa)) is the NACHT domain. 132-139 (GAAGIGKS) lines the ATP pocket. 2 LRR repeats span residues 627 to 647 (NLEG…QSLC) and 684 to 704 (SLTE…RMLC). The interval 789-922 (FWGPTGPVAT…GYTVLKNPSF (134 aa)) is ZU5. Residues 789-1072 (FWGPTGPVAT…KFDHLCDQEF (284 aa)) enclose the FIIND domain. Residues 923–1072 (SPMGVVLRII…KFDHLCDQEF (150 aa)) are UPA. A CARD domain is found at 1106–1189 (HFMDQHREQL…HLVMDLFEKS (84 aa)).

Belongs to the NLRP family. In terms of assembly, interacts with DPP9; leading to inhibit activation of the inflammasome. DPP9 acts via formation of a ternary complex, composed of a DPP9 homodimer, one full-length Nlrp1b protein, and one cleaved C-terminus of Nlrp1b (NACHT, LRR and PYD domains-containing protein 1b, C-terminus). Interacts with DPP8; leading to inhibit activation of the inflammasome, probably via formation of a ternary complex with DPP8. Interacts (via LRR repeats) with BCL2 and BCL2L1 (via the loop between motifs BH4 and BH3). Interacts with NOD2; this interaction may increase IL1B release. Interacts with EIF2AK2/PKR; this interaction requires EIF2AK2 activity, is accompanied by EIF2AK2 autophosphorylation and promotes inflammasome assembly in response to B.anthracis lethal toxin. Interacts with MEFV; this interaction targets Nlrp1b to degradation by autophagy, hence preventing excessive IL1B- and IL18-mediated inflammation. Interacts with the C-terminal part of Nlrp1b (NACHT, LRR and PYD domains-containing protein 1b, C-terminus) in absence of pathogens and other damage-associated signals. As to quaternary structure, interacts with the N-terminal part of Nlrp1b (NACHT, LRR and PYD domains-containing protein 1b, N-terminus) in absence of pathogens and other damage-associated signals. Homomultimer; forms the Nlrp1b inflammasome polymeric complex, a filament composed of homopolymers of this form in response to pathogens and other damage-associated signals. The Nlrp1b inflammasome polymeric complex directly recruits pro-caspase-1 (proCASP1) independently of PYCARD/ASC. Interacts (via CARD domain) with CASP1 (via CARD domain); leading to CASP1 activation. Post-translationally, autocatalytically cleaved. Autocatalytic cleavage in FIIND region occurs constitutively, prior to activation signals, and is required for inflammasome activity (IL1B release), possibly by facilitating CASP1 binding. Both N- and C-terminal parts remain associated non-covalently. Ubiquitinated by the N-end rule pathway in response to pathogens and other damage-associated signals, leading to its degradation by the proteasome and subsequent release of the cleaved C-terminal part of the protein (NACHT, LRR and PYD domains-containing protein 1b, C-terminus), which polymerizes and forms the Nlrp1b inflammasome. In terms of processing, (Microbial infection) Cleavage by B.anthracis lethal toxin (LT) endopeptidase promotes ubiquitination and degradation of the N-terminal part, releasing the cleaved C-terminal part of the protein (NACHT, LRR and PYD domains-containing protein 1b, C-terminus), which polymerizes and forms the Nlrp1b inflammasome. As to expression, expressed in macrophages.

Its subcellular location is the cytoplasm. The protein resides in the cytosol. It localises to the inflammasome. With respect to regulation, activated by cleavage by B.anthracis lethal toxin (LT) endopeptidase. Cleavage by LT promotes ubiquitination and degradation of the N-terminal part, releasing the cleaved C-terminal part of the protein (NACHT, LRR and PYD domains-containing protein 1b, C-terminus), which polymerizes and forms the Nlrp1b inflammasome. Nlrp1b inflammasome is inhibited by DPP8 and DPP9, which sequester the C-terminal fragment of Nlrp1b (NACHT, LRR and PYD domains-containing protein 1b, C-terminus) in a ternary complex, thereby preventing Nlrp1b oligomerization and activation. Nlrp1b inflammasome is activated by Val-boroPro (Talabostat, PT-100), an inhibitor of dipeptidyl peptidases DPP8 and DPP9. Val-boroPro relieves inhibition of DPP8 and/or DPP9 by promoting disruption of the ternary complex, releasing its C-terminal part from autoinhibition. Activated by metabolic inhibitors, such as 2-deoxy-D-glucose and sodium azide. Not activated by muramyl dipeptide, nor by full-length bacterial peptidoglycan. In terms of biological role, acts as the sensor component of the Nlrp1b inflammasome, which mediates inflammasome activation in response to various pathogen-associated signals, leading to subsequent pyroptosis. Inflammasomes are supramolecular complexes that assemble in the cytosol in response to pathogens and other damage-associated signals and play critical roles in innate immunity and inflammation. Acts as a recognition receptor (PRR): recognizes specific pathogens and other damage-associated signals, such as B.anthracis lethal toxin (LT) or Val-boroPro inhibitor, and mediates the formation of the inflammasome polymeric complex. In response to pathogen-associated signals, the N-terminal part of Nlrp1b is degraded by the proteasome, releasing the cleaved C-terminal part of the protein (NACHT, LRR and PYD domains-containing protein 1b, C-terminus), which polymerizes to initiate the formation of the inflammasome complex: the inflammasome directly recruits pro-caspase-1 (proCASP1) independently of PYCARD/ASC and promotes caspase-1 (CASP1) activation, which subsequently cleaves and activates inflammatory cytokines IL1B and IL18 and gasdermin-D (GSDMD), leading to pyroptosis. In the absence of GSDMD expression, the Nlrp1b inflammasome is able to recruit and activate CASP8, leading to activation of gasdermin-E (GSDME). Activation of Nlrp1b inflammasome is also required for HMGB1 secretion; the active cytokines and HMGB1 stimulate inflammatory responses. Primary mediator of macrophage susceptibility to B.anthracis LT: in response to B.anthracis infection, macrophages and dendritic cells release IL1B and undergo pyroptosis. This early inflammatory response to the toxin increases resistance to infection by B.anthracis spores. Constitutes the precursor of the Nlrp1b inflammasome, which mediates autoproteolytic processing within the FIIND domain to generate the N-terminal and C-terminal parts, which are associated non-covalently in absence of pathogens and other damage-associated signals. Its function is as follows. Regulatory part that prevents formation of the Nlrp1b inflammasome: in absence of pathogens and other damage-associated signals, interacts with the C-terminal part of Nlrp1b (NACHT, LRR and PYD domains-containing protein 1b, C-terminus), preventing activation of the Nlrp1b inflammasome. In response to pathogen-associated signals, this part is ubiquitinated by the N-end rule pathway and degraded by the proteasome, releasing the cleaved C-terminal part of the protein, which polymerizes and forms the Nlrp1b inflammasome. Functionally, constitutes the active part of the Nlrp1b inflammasome. In absence of pathogens and other damage-associated signals, interacts with the N-terminal part of Nlrp1b (NACHT, LRR and PYD domains-containing protein 1b, N-terminus), preventing activation of the Nlrp1b inflammasome. In response to pathogen-associated signals, the N-terminal part of Nlrp1b is degraded by the proteasome, releasing this form, which polymerizes to form the Nlrp1b inflammasome complex: the Nlrp1b inflammasome complex then directly recruits pro-caspase-1 (proCASP1) and promotes caspase-1 (CASP1) activation, leading to gasdermin-D (GSDMD) cleavage and subsequent pyroptosis. This Mus musculus (Mouse) protein is NACHT, LRR and PYD domains-containing protein 1b allele 5 (Nlrp1b).